A 1447-amino-acid polypeptide reads, in one-letter code: Adhesion G protein-coupled receptor L3 (1447 aa).

Positions M1–A19 are cleaved as a signal peptide. Residues F20–L862 lie on the Extracellular side of the membrane. Residues S35–V124 enclose the SUEL-type lectin domain. 5 disulfides stabilise this stretch: C36–C66, C45–C123, C78–C110, C91–C97, and C135–C317. A glycan (N-linked (GlcNAc...) asparagine) is linked at N93. The Olfactomedin-like domain maps to L134 to P393. The tract at residues Y249–E279 is interaction with FLRT3. Ca(2+)-binding residues include D264, N312, A313, and V367. The tract at residues D426–A473 is disordered. A compositionally biased stretch (low complexity) spans S428 to S458. 6 N-linked (GlcNAc...) asparagine glycosylation sites follow: N464, N549, N746, N759, N804, and N830. The GAIN-B domain maps to D675 to K854. Disulfide bonds link C805/C836 and C824/C838. The interval C805–K854 is GPS. The tract at residues T842–H855 is stachel. The helical transmembrane segment at L863 to F888 threads the bilayer. Residues F889 to R896 lie on the Cytoplasmic side of the membrane. Residues N897–I918 traverse the membrane as a helical segment. The Extracellular segment spans residues N919–A926. Residues C927–V950 traverse the membrane as a helical segment. An intrachain disulfide couples C927 to C999. Over Q951 to R967 the chain is Cytoplasmic. A helical membrane pass occupies residues K968 to Y990. The Extracellular portion of the chain corresponds to R991 to T1005. The chain crosses the membrane as a helical span at residues Y1006–G1027. Residues I1028 to W1053 are Cytoplasmic-facing. Residues V1054–M1073 form a helical membrane-spanning segment. Over Y1074–S1078 the chain is Extracellular. N1076 carries N-linked (GlcNAc...) asparagine glycosylation. The helical transmembrane segment at T1079–L1104 threads the bilayer. Topologically, residues Q1105–L1447 are cytoplasmic. Residues G1123 to G1147 are disordered. Phosphoserine is present on S1164. A disordered region spans residues I1423–L1447. The short motif at H1442–L1447 is the PDZ-binding element.

The protein belongs to the G-protein coupled receptor 2 family. LN-TM7 subfamily. As to quaternary structure, heterodimer of 2 chains generated by proteolytic processing; the large extracellular N-terminal fragment and the membrane-bound C-terminal fragment predominantly remain associated and non-covalently linked. Interacts (via olfactomedin-like domain) with FLRT1 (via extracellular domain). Interacts (via olfactomedin-like domain) with FLRT2 (via extracellular domain). Interacts (via olfactomedin-like domain) with FLRT3 (via extracellular domain); the interaction is direct. Interacts (via extracellular domain) with TENM1. Interacts (via extracellular domain) with TENM2. Interacts (via extracellular domain) with TENM3. Identified in a complex with FLRT3 and UNC5B; does not interact with UNC5B by itself. Identified in a complex with FLRT3 and UNC5D; does not interact with UNC5D by itself. Interacts (via PDZ-binding motif) with SHANK3. Interacts (via PDZ-binding motif) with DLG4. In terms of processing, autoproteolytically processed at the GPS region of the GAIN-B domain; this cleavage modulates receptor activity.

The protein resides in the cell membrane. Its subcellular location is the postsynaptic cell membrane. The protein localises to the cell projection. It is found in the axon. It localises to the cell junction. With respect to regulation, forms a heterodimer of 2 chains generated by proteolytic processing that remain associated through non-covalent interactions mediated by the GAIN-B domain. In the inactivated receptor, the Stachel sequence (also named stalk) is embedded in the GAIN-B domain, where it adopts a beta-strand conformation. On activation, the Stachel moves into the 7 transmembrane region and adopts a twisted hook-shaped configuration that forms contacts within the receptor, leading to coupling of a G-alpha protein, which activates signaling. The cleaved GAIN-B and N-terminal domains can then dissociate from the rest of the receptor. In terms of biological role, orphan adhesion G-protein coupled receptor (aGPCR), which mediates synapse specificity. Ligand binding causes a conformation change that triggers signaling via guanine nucleotide-binding proteins (G proteins) and modulates the activity of downstream effectors. ADGRL3 is coupled with different classes of G alpha proteins, such as G(12)/G(13), G(s), G(i) or G(q), depending on the context. Coupling to G(12)/G(13) G proteins, which mediates the activation Rho small GTPases is the most efficient. Following G-protein coupled receptor activation, associates with cell adhesion molecules that are expressed at the surface of adjacent cells to direct synapse specificity. Specifically mediates the establishment of Schaffer-collateral synapses formed by CA3-region axons on CA1-region pyramidal neurons in the hippocampus. Localizes to postsynaptic spines in excitatory synapses in the S.oriens and S.radiatum and interacts with presynaptic cell adhesion molecules FLRT3 and TENM2, promoting synapse formation. Plays a role in the development of glutamatergic synapses in the cortex. Important in determining the connectivity rates between the principal neurons in the cortex. Orphan adhesion G-protein coupled receptor (aGPCR), which mediates synapse specificity. Ligand binding causes a conformation change that triggers signaling via guanine nucleotide-binding proteins (G proteins) and modulates the activity of downstream effectors, such as adenylate cyclase. Isoform 1 is specifically coupled to G(s) G proteins and mediates activation of adenylate cyclase activity. Following G-protein coupled receptor activation, undergoes liquid-liquid phase transition, associates with (1) cell adhesion molecules that are expressed at the surface of adjacent cells, as well as (2) PDZ-containing proteins, such as SHANK3 and DLG4, in the cytoplasm to direct synapse formation. The polypeptide is Adhesion G protein-coupled receptor L3 (Homo sapiens (Human)).